The chain runs to 66 residues: Ribosome biogenesis protein Nop10 (66 aa).

This sequence belongs to the NOP10 family.

Its function is as follows. Involved in ribosome biogenesis; more specifically in 18S rRNA pseudouridylation and in cleavage of pre-rRNA. The chain is Ribosome biogenesis protein Nop10 from Desulfurococcus amylolyticus (strain DSM 18924 / JCM 16383 / VKM B-2413 / 1221n) (Desulfurococcus kamchatkensis).